The primary structure comprises 76 residues: Conotoxin TxMEKL-011 (76 aa).

Positions 1–19 (MEKLTILLLVAAVLMSTQA) are cleaved as a signal peptide. A propeptide spanning residues 20 to 45 (LVERAGENRSKENIKFLLKRKRAADR) is cleaved from the precursor. Intrachain disulfides connect Cys-51–Cys-65, Cys-58–Cys-69, and Cys-64–Cys-73.

It belongs to the conotoxin O2 superfamily. As to expression, expressed by the venom duct.

The protein resides in the secreted. The polypeptide is Conotoxin TxMEKL-011 (Conus textile (Cloth-of-gold cone)).